The sequence spans 230 residues: Large ribosomal subunit protein uL1 (230 aa).

It belongs to the universal ribosomal protein uL1 family. As to quaternary structure, part of the 50S ribosomal subunit.

Its function is as follows. Binds directly to 23S rRNA. The L1 stalk is quite mobile in the ribosome, and is involved in E site tRNA release. Protein L1 is also a translational repressor protein, it controls the translation of the L11 operon by binding to its mRNA. The protein is Large ribosomal subunit protein uL1 of Bifidobacterium longum subsp. infantis (strain ATCC 15697 / DSM 20088 / JCM 1222 / NCTC 11817 / S12).